The primary structure comprises 365 residues: Galactoside alpha-(1,2)-fucosyltransferase 1 (365 aa).

Over Met-1 to His-8 the chain is Cytoplasmic. A helical; Signal-anchor for type II membrane protein transmembrane segment spans residues Leu-9–Phe-25. Residues Leu-26–Pro-365 are Lumenal-facing. N-linked (GlcNAc...) asparagine glycosylation is found at Asn-65, Asn-301, and Asn-327.

Belongs to the glycosyltransferase 11 family.

The protein localises to the golgi apparatus. It is found in the golgi stack membrane. The catalysed reaction is a beta-D-galactosyl-(1-&gt;4)-N-acetyl-beta-D-glucosaminyl derivative + GDP-beta-L-fucose = an alpha-L-Fuc-(1-&gt;2)-beta-D-Gal-(1-&gt;4)-beta-D-GlcNAc derivative + GDP + H(+). The enzyme catalyses a ganglioside GA1 + GDP-beta-L-fucose = a ganglioside Fuc-GA1 + GDP + H(+). It carries out the reaction a beta-D-Gal-(1-&gt;3)-beta-D-GlcNAc-(1-&gt;3)-beta-D-Gal-(1-&gt;4)-beta-D-Glc-(1&lt;-&gt;1')-Cer(d18:1(4E)) + GDP-beta-L-fucose = alpha-L-fucosyl-(1-&gt;2)- beta-D-galactosyl-(1-&gt;3)-N-acetyl-beta-D-glucosaminyl-(1-&gt;3)-beta-D-galactosyl-(1-&gt;4)-beta-D-glucosyl-(1&lt;-&gt;1')-N-acylsphing-4-enine + GDP + H(+). It catalyses the reaction a neolactoside nLc4Cer(d18:1(4E)) + GDP-beta-L-fucose = a neolactoside IV(2)-alpha-Fuc-nLc4Cer(d18:1(4E)) + GDP + H(+). The catalysed reaction is a ganglioside GM1 + GDP-beta-L-fucose = a ganglioside Fuc-GM1 + GDP + H(+). The enzyme catalyses beta-D-galactosyl-(1-&gt;3)-N-acetyl-D-galactosamine + GDP-beta-L-fucose = alpha-L-fucosyl-(1-&gt;2)-beta-D-galactosyl-(1-&gt;3)-N-acetyl-D-galactosamine + GDP + H(+). It functions in the pathway protein modification; protein glycosylation. Catalyzes the transfer of L-fucose, from a guanosine diphosphate-beta-L-fucose, to the terminal galactose residue of glycoconjugates through an alpha(1,2) linkage leading to H antigen synthesis that is an intermediate substrate in the synthesis of ABO blood group antigens. H antigen is essential for maturation of the glomerular layer of the main olfactory bulb, in cell migration and early cell-cell contacts during tumor associated angiogenesis. Preferentially fucosylates soluble lactose and to a lesser extent fucosylates glycolipids gangliosides GA1 and GM1a. The polypeptide is Galactoside alpha-(1,2)-fucosyltransferase 1 (Mico humeralifer (Black and white tassel-ear marmoset)).